The chain runs to 103 residues: Leukocyte cysteine proteinase inhibitor 1 (103 aa).

Residue Met1 is modified to Blocked amino end (Met); partial. Positions 1 to 20 (MESEEMLAGGLTEPRPATPE) are disordered. Residues 51 to 55 (QVVAG) carry the Secondary area of contact motif.

Belongs to the cystatin family.

It is found in the cytoplasm. In terms of biological role, potent inhibitor of cathepsins L and S, and papain. This chain is Leukocyte cysteine proteinase inhibitor 1, found in Sus scrofa (Pig).